Consider the following 481-residue polypeptide: Aspartyl/glutamyl-tRNA(Asn/Gln) amidotransferase subunit B (481 aa).

The protein belongs to the GatB/GatE family. GatB subfamily. In terms of assembly, heterotrimer of A, B and C subunits.

The enzyme catalyses L-glutamyl-tRNA(Gln) + L-glutamine + ATP + H2O = L-glutaminyl-tRNA(Gln) + L-glutamate + ADP + phosphate + H(+). It catalyses the reaction L-aspartyl-tRNA(Asn) + L-glutamine + ATP + H2O = L-asparaginyl-tRNA(Asn) + L-glutamate + ADP + phosphate + 2 H(+). In terms of biological role, allows the formation of correctly charged Asn-tRNA(Asn) or Gln-tRNA(Gln) through the transamidation of misacylated Asp-tRNA(Asn) or Glu-tRNA(Gln) in organisms which lack either or both of asparaginyl-tRNA or glutaminyl-tRNA synthetases. The reaction takes place in the presence of glutamine and ATP through an activated phospho-Asp-tRNA(Asn) or phospho-Glu-tRNA(Gln). This is Aspartyl/glutamyl-tRNA(Asn/Gln) amidotransferase subunit B from Ehrlichia chaffeensis (strain ATCC CRL-10679 / Arkansas).